Here is a 156-residue protein sequence, read N- to C-terminus: IFN signaling evasion protein OPG029 (156 aa).

The protein belongs to the orthopoxvirus OPG029 family. Interacts with host TANK, TBKBP1 and AZI2; these interactions prevent interferon production. Interacts with host STAT2.

Prevents establishment of cellular antiviral state by blocking virus-induced phosphorylation and activation of interferon regulatory factors 3/IRF3 and 7/IRF7, transcription factors critical for the induction of interferons alpha and beta. This blockage is produced through the inhibition of host TBK1, by binding host TBK1 adapter proteins TBKBP1 and AZI2, thereby producing a strong inhibition of the phosphorylation and activation of IRF3 and IRF7. Also acts as an inhibitor of the cellular response to type I IFN by interacting with host STAT2. Mechanistically, exerts its inhibitory effect after host ISGF3 complex (composed of STAT1, STAT2 and IRF9) binding to the interferon stimulated response element (ISRE). The protein is IFN signaling evasion protein OPG029 (OPG029) of Variola virus (isolate Human/India/Ind3/1967) (VARV).